A 258-amino-acid chain; its full sequence is Snake venom serine protease KN13 (258 aa).

The N-terminal stretch at 1-18 (MVLIRVLANLLILQLSYA) is a signal peptide. The propeptide occupies 19–24 (QRSSEL). In terms of domain architecture, Peptidase S1 spans 25–249 (VIGGDECNIN…HLDWIQNIIA (225 aa)). Intrachain disulfides connect Cys-31–Cys-163, Cys-50–Cys-66, Cys-98–Cys-256, Cys-142–Cys-210, Cys-174–Cys-189, and Cys-200–Cys-225. His-65 acts as the Charge relay system in catalysis. N-linked (GlcNAc...) asparagine glycosylation is present at Asn-103. The active-site Charge relay system is the Asp-110. Asn-121, Asn-122, Asn-154, and Asn-170 each carry an N-linked (GlcNAc...) asparagine glycan. Ser-204 serves as the catalytic Charge relay system. An N-linked (GlcNAc...) asparagine glycan is attached at Asn-251.

Belongs to the peptidase S1 family. Snake venom subfamily. As to quaternary structure, monomer. As to expression, expressed by the venom gland.

It localises to the secreted. Functionally, snake venom serine protease that may act in the hemostasis system of the prey. In Trimeresurus stejnegeri (Chinese green tree viper), this protein is Snake venom serine protease KN13.